Reading from the N-terminus, the 463-residue chain is Argininosuccinate lyase (463 aa).

This sequence belongs to the lyase 1 family. Argininosuccinate lyase subfamily.

The protein localises to the cytoplasm. The enzyme catalyses 2-(N(omega)-L-arginino)succinate = fumarate + L-arginine. Its pathway is amino-acid biosynthesis; L-arginine biosynthesis; L-arginine from L-ornithine and carbamoyl phosphate: step 3/3. The protein is Argininosuccinate lyase of Dinoroseobacter shibae (strain DSM 16493 / NCIMB 14021 / DFL 12).